A 148-amino-acid chain; its full sequence is SPbeta prophage-derived uncharacterized protein YomK (148 aa).

Helical transmembrane passes span W72–V92 and N104–I124.

Its subcellular location is the cell membrane. This chain is SPbeta prophage-derived uncharacterized protein YomK (yomK), found in Bacillus subtilis (strain 168).